Here is a 786-residue protein sequence, read N- to C-terminus: MATKEELLSLGLSDSKVAETLKNVKLTETIGSIVKLASESGEISKQKGTLLYQLATKLKPQVAAHTPLVVKYIMNDGIKTEPQLSAAIEYLLSHTVKGIQVPDFEKSCGVGVVVTIDDIEAAVTKVIGQHREKIVAERYSFPAGKLLGELRALLPWADGAITKKEVDLRFLELLGPKTAEDLAPKKKEKKPEGPKPSKDAAAAATAPGTKNQKEASPEEFADGAETMDELLRTRAHFHKVGENFKQDGYVTTPKTAELLKAHVAAVGGKVVTRFPPEPNGVLHIGHAKAININFGYAKAMGGVCNLRFDDTNPEKEEEKFFSAIEDIVHWLGYDPARVTHSSDNFQQLYLWAVKLIQKGLAFVCHQKVEEMRGFEVQLSPWRERPIEENIQLFEDMKNGKFDEGEATLRLKLTLEEGKVDPVAYRIKYVPHHRTGNQWCIYPTYDYTHCLCDSIENITHSLCTKEFQSRRSSYYWLCNALDIYCPVQWEYGRLNVNYTVVSKRKILKLITTKTVNDWDDPRLFTLTALRRRGIPSEAINRFVAKLGLTMSQMVIDPHVLDATVRDYLNIHAPRTMAVLEGLKLTIENFSELNLPSSVDVPDFPSDPTDPRKHSVSVDREIFIEKSDYKPDDSDKSFRRLTPKQAVGLKHIGLVLRFVKEVKDAEGHVTEVVVKAEKLSEKDKPKAFIHWVAKPVSCEVRLYDRLFKSKNPEDAQLVPGGFLSDINPDSLTVVYNALIDQSIAKSKVYDRFQFERIGFFCVDRDSTSSTLVFNRTVMLKDGGASGKN.

The segment covering 181–198 (DLAPKKKEKKPEGPKPSK) has biased composition (basic and acidic residues). Residues 181–218 (DLAPKKKEKKPEGPKPSKDAAAAATAPGTKNQKEASPE) form a disordered region. A 'HIGH' region motif is present at residues 276–286 (PEPNGVLHIGH). ATP is bound by residues 277 to 279 (EPN) and 283 to 289 (HIGHAKA). The L-glutamine site is built by Asp309 and Tyr444. Residues Thr463, 492 to 493 (RL), and 500 to 502 (VSK) contribute to the ATP site. Residues 499–503 (VVSKR) carry the 'KMSKS' region motif.

This sequence belongs to the class-I aminoacyl-tRNA synthetase family.

It carries out the reaction tRNA(Gln) + L-glutamine + ATP = L-glutaminyl-tRNA(Gln) + AMP + diphosphate. The sequence is that of Probable glutamine--tRNA ligase from Caenorhabditis elegans.